Reading from the N-terminus, the 456-residue chain is Exodeoxyribonuclease 7 large subunit (456 aa).

This sequence belongs to the XseA family. In terms of assembly, heterooligomer composed of large and small subunits.

It localises to the cytoplasm. The enzyme catalyses Exonucleolytic cleavage in either 5'- to 3'- or 3'- to 5'-direction to yield nucleoside 5'-phosphates.. Bidirectionally degrades single-stranded DNA into large acid-insoluble oligonucleotides, which are then degraded further into small acid-soluble oligonucleotides. The protein is Exodeoxyribonuclease 7 large subunit of Escherichia coli O157:H7.